The chain runs to 92 residues: Beta-2-microglobulin (92 aa).

The Ig-like C1-type domain occupies 2-89 (PQIQVYSRHP…NHVSMDKPMT (88 aa)). A disulfide bridge connects residues C22 and C77.

It belongs to the beta-2-microglobulin family. In terms of assembly, heterodimer of an alpha chain and a beta chain. Beta-2-microglobulin is the beta-chain of major histocompatibility complex class I molecules.

The protein resides in the secreted. In terms of biological role, component of the class I major histocompatibility complex (MHC). Involved in the presentation of peptide antigens to the immune system. In Mus spretus (Western Mediterranean mouse), this protein is Beta-2-microglobulin (B2m).